The sequence spans 277 residues: Large ribosomal subunit protein uL2 (277 aa).

2 disordered regions span residues 36 to 58 (PLHK…GGGH) and 219 to 277 (TVRG…RKNK). The span at 258–277 (KTRKKKNKSDKFIVRRRKNK) shows a compositional bias: basic residues.

This sequence belongs to the universal ribosomal protein uL2 family. As to quaternary structure, part of the 50S ribosomal subunit. Forms a bridge to the 30S subunit in the 70S ribosome.

One of the primary rRNA binding proteins. Required for association of the 30S and 50S subunits to form the 70S ribosome, for tRNA binding and peptide bond formation. It has been suggested to have peptidyltransferase activity; this is somewhat controversial. Makes several contacts with the 16S rRNA in the 70S ribosome. The protein is Large ribosomal subunit protein uL2 of Bacillus velezensis (strain DSM 23117 / BGSC 10A6 / LMG 26770 / FZB42) (Bacillus amyloliquefaciens subsp. plantarum).